Reading from the N-terminus, the 424-residue chain is Serine--tRNA ligase (424 aa).

Residue 233–235 (TAE) coordinates L-serine. 264 to 266 (RRE) contacts ATP. E287 serves as a coordination point for L-serine. ATP is bound at residue 351-354 (EISS). S387 is a binding site for L-serine.

This sequence belongs to the class-II aminoacyl-tRNA synthetase family. Type-1 seryl-tRNA synthetase subfamily. In terms of assembly, homodimer. The tRNA molecule binds across the dimer.

The protein resides in the cytoplasm. It catalyses the reaction tRNA(Ser) + L-serine + ATP = L-seryl-tRNA(Ser) + AMP + diphosphate + H(+). The catalysed reaction is tRNA(Sec) + L-serine + ATP = L-seryl-tRNA(Sec) + AMP + diphosphate + H(+). Its pathway is aminoacyl-tRNA biosynthesis; selenocysteinyl-tRNA(Sec) biosynthesis; L-seryl-tRNA(Sec) from L-serine and tRNA(Sec): step 1/1. Its function is as follows. Catalyzes the attachment of serine to tRNA(Ser). Is also able to aminoacylate tRNA(Sec) with serine, to form the misacylated tRNA L-seryl-tRNA(Sec), which will be further converted into selenocysteinyl-tRNA(Sec). The sequence is that of Serine--tRNA ligase from Acaryochloris marina (strain MBIC 11017).